We begin with the raw amino-acid sequence, 1345 residues long: Aldehyde oxidase 2 (1345 aa).

A 2Fe-2S ferredoxin-type domain is found at Asp-9 to Val-96. 4 residues coordinate [2Fe-2S] cluster: Cys-48, Cys-53, Cys-56, and Cys-78. Gln-117 serves as a coordination point for Mo-molybdopterin. [2Fe-2S] cluster is bound by residues Cys-118, Cys-121, Cys-153, and Cys-155. Cys-155 lines the Mo-molybdopterin pocket. The FAD-binding PCMH-type domain maps to Phe-238 to Lys-423. FAD contacts are provided by residues Leu-266–Leu-273, Ala-347, Ser-356, His-360, Asp-369, and Leu-413. Residues Gly-812 to Phe-813, Ala-1094 to Gly-1097, Gln-1209, and Leu-1274 contribute to the Mo-molybdopterin site. Residue Glu-1276 is the Proton acceptor; for azaheterocycle hydroxylase activity of the active site.

This sequence belongs to the xanthine dehydrogenase family. Homodimer. The cofactor is [2Fe-2S] cluster. FAD serves as cofactor. Requires Mo-molybdopterin as cofactor.

The protein resides in the cytoplasm. It catalyses the reaction an aldehyde + O2 + H2O = a carboxylate + H2O2 + H(+). Its function is as follows. Oxidase with broad substrate specificity, oxidizing aromatic azaheterocycles, such as phthalazine, as well as aldehydes, such as benzaldehyde and retinal. In Rattus norvegicus (Rat), this protein is Aldehyde oxidase 2 (Aox2).